Here is a 367-residue protein sequence, read N- to C-terminus: MVTRRRSKKKKKTKRKKQSSKEKEKYQTFINLPCDLLQLVISRLPLKDNIRASAVCKTWHEACVSLRVIHTSPWLIYFSKTDDSYELYDPSMQKNCNLHFPELSGFRVCYSKDGWLLMYNPNSYQLLFFNPFTRDCVPMPTLWMAYDQRMAFSCAPTSTSCLLFTVTSVTWNYITIKTYFANAKEWKTSVFKNRLQRNFNTFEQIVFSNGVFYCLTNTGCLALFDPSLNYWNVLPGRPPKRPGSNGCFMTEHQGEIFLIYMYRHMNPTVLKLDLTSFEWAERKTLGGLTIYASALSSESRAEQQKQSGIWNCLCLSVFHGFKRTCIYYKVDEESEVCFKWKKQNPYENIWIMPPLNLIDLPLFDHRI.

Positions Met-1–Gln-18 are enriched in basic residues. Residues Met-1–Glu-24 are disordered. Residues Tyr-26–Thr-81 form the F-box domain.

The polypeptide is F-box protein At3g56470 (Arabidopsis thaliana (Mouse-ear cress)).